The primary structure comprises 87 residues: Cell division topological specificity factor (87 aa).

The protein belongs to the MinE family.

Prevents the cell division inhibition by proteins MinC and MinD at internal division sites while permitting inhibition at polar sites. This ensures cell division at the proper site by restricting the formation of a division septum at the midpoint of the long axis of the cell. In Herpetosiphon aurantiacus (strain ATCC 23779 / DSM 785 / 114-95), this protein is Cell division topological specificity factor.